We begin with the raw amino-acid sequence, 228 residues long: Ribulose-phosphate 3-epimerase (228 aa).

Serine 9 serves as a coordination point for substrate. A divalent metal cation-binding residues include histidine 34, aspartate 36, and histidine 70. The active-site Proton acceptor is aspartate 36. Substrate-binding positions include histidine 70, 146 to 149 (GFPG), 179 to 181 (DGG), and 201 to 202 (GS). Aspartate 179 provides a ligand contact to a divalent metal cation. The active-site Proton donor is aspartate 179.

The protein belongs to the ribulose-phosphate 3-epimerase family. A divalent metal cation is required as a cofactor.

The catalysed reaction is D-ribulose 5-phosphate = D-xylulose 5-phosphate. Its pathway is carbohydrate degradation. Functionally, catalyzes the reversible epimerization of D-ribulose 5-phosphate to D-xylulose 5-phosphate. The polypeptide is Ribulose-phosphate 3-epimerase (Buchnera aphidicola subsp. Baizongia pistaciae (strain Bp)).